Here is a 92-residue protein sequence, read N- to C-terminus: Long neurotoxin 3FTx-Oxy2 (92 aa).

A signal peptide spans 1–21 (MKTLLLTLVVVTIVCLDLGYT). 4 disulfide bridges follow: Cys24-Cys42, Cys35-Cys63, Cys67-Cys79, and Cys80-Cys85.

This sequence belongs to the three-finger toxin family. Long-chain subfamily. Type II alpha-neurotoxin sub-subfamily. As to expression, expressed by the venom gland.

It is found in the secreted. In terms of biological role, binds with high affinity to muscular (alpha-1/CHRNA1) and neuronal (alpha-7/CHRNA7) nicotinic acetylcholine receptor (nAChR) and inhibits acetylcholine from binding to the receptor, thereby impairing neuromuscular and neuronal transmission. This is Long neurotoxin 3FTx-Oxy2 from Oxyuranus microlepidotus (Inland taipan).